A 442-amino-acid polypeptide reads, in one-letter code: UPF0489 protein C5orf22 homolog (442 aa).

The segment at 175–208 (SSAKKPKLALEDSRNTASTNCDSSSEGLEKDTAT) is disordered. Polar residues predominate over residues 189–200 (NTASTNCDSSSE).

It belongs to the UPF0489 family.

This is UPF0489 protein C5orf22 homolog from Pongo abelii (Sumatran orangutan).